The following is a 341-amino-acid chain: Serpentine receptor class alpha-28 (341 aa).

7 helical membrane-spanning segments follow: residues Phe25–Leu45, Leu57–Leu77, Tyr107–Phe129, Ala142–Phe162, Val188–Ile208, Ile242–Ile262, and Leu275–Leu295.

The protein belongs to the nematode receptor-like protein sra family.

Its subcellular location is the membrane. The polypeptide is Serpentine receptor class alpha-28 (sra-28) (Caenorhabditis elegans).